Consider the following 300-residue polypeptide: 2-keto-3-deoxy-L-fuconate dehydrogenase (300 aa).

Residues 63-90 (LITA…IATD) and aspartate 112 each bind NAD(+). Substrate is bound at residue arginine 198. Residue tyrosine 201 is the Proton acceptor of the active site. NAD(+)-binding positions include lysine 205 and 234-238 (IKTPS). Positions 242 and 260 each coordinate substrate.

Belongs to the short-chain dehydrogenases/reductases (SDR) family.

In terms of biological role, plays a role in the catabolism of L-fucose. Catalyzes the NAD(+)-dependent oxidation of 2-keo-3-deoxy-L-fuconate to 2,4-diketo-3-deoxy-L-fuconate. The sequence is that of 2-keto-3-deoxy-L-fuconate dehydrogenase from Xanthomonas campestris pv. campestris (strain ATCC 33913 / DSM 3586 / NCPPB 528 / LMG 568 / P 25).